A 105-amino-acid polypeptide reads, in one-letter code: Chloroacetanilide N-alkylformylase 2, ferredoxin component (105 aa).

Residues P2–D105 enclose the 2Fe-2S ferredoxin-type domain. Residues C40, C46, C49, and C86 each coordinate [2Fe-2S] cluster.

Belongs to the adrenodoxin/putidaredoxin family. In terms of assembly, the chloroacetanilide N-alkylformylase multicomponent enzyme system is composed of an oxygenase component (CndA) and an electron transfer component formed by a ferredoxin reductase (CndC1) and a ferredoxin (CndB1). In vitro, chloroacetanilide N-alkylformylase assays in which CndB1 is substituted for CndB2 demonstrate that the two enzymes possess nearly identical activities. It depends on [2Fe-2S] cluster as a cofactor.

Component of the chloroacetanilide N-alkylformylase multicomponent enzyme system involved in the degradation of chloroacetanilide herbicides (N-alkoxyalkyl-N-chloroacetyl-substituted aniline derivatives). In vitro, functions as an intermediate electron transfer protein. In Rhizorhabdus wittichii (strain DC-6 / KACC 16600) (Sphingomonas wittichii), this protein is Chloroacetanilide N-alkylformylase 2, ferredoxin component.